We begin with the raw amino-acid sequence, 428 residues long: MNAHAQACAVTSAASPDGVLRERGQREVFCGLTGIVWLHRKIQDAFFLVVGSRTCAHLIQSAAGVMIFAEPRFATAIMEERDLAGLVDANDELDRIVTQLLARRPEIKLLFLVGSCPSEVIKLDLSRAALRLSQRFSPGVRVLNYSGSGIETTFTQGEDACLASLVPVLPAADRSARPSLLVVGALADVVEDQFKRTFAALGIDQVAFLPPRRSSELPAIGPETRVLLAQPFLGDTARALEERGCRRIAAPFPLGGEGTALWLAAAADAFGVSHAHVERTIAPLKARAERALARYRAQLAGKRVFLFPDSQIEIPLARFLSREIGMELVEVGTPYLHRDHLASELALLPGGTQLSEGQDVERQLDRCRDARPDLVVCGLGLANPLEAEGLTTKWSIELIFTPIQGFEQAGDLAELFARPLLRQTRLAV.

[4Fe-4S] cluster contacts are provided by Cys30, Cys55, and Cys116.

This sequence belongs to the BchN/ChlN family. Protochlorophyllide reductase is composed of three subunits; BchL, BchN and BchB. Forms a heterotetramer of two BchB and two BchN subunits. Requires [4Fe-4S] cluster as cofactor.

It catalyses the reaction chlorophyllide a + oxidized 2[4Fe-4S]-[ferredoxin] + 2 ADP + 2 phosphate = protochlorophyllide a + reduced 2[4Fe-4S]-[ferredoxin] + 2 ATP + 2 H2O. It participates in porphyrin-containing compound metabolism; bacteriochlorophyll biosynthesis (light-independent). In terms of biological role, component of the dark-operative protochlorophyllide reductase (DPOR) that uses Mg-ATP and reduced ferredoxin to reduce ring D of protochlorophyllide (Pchlide) to form chlorophyllide a (Chlide). This reaction is light-independent. The NB-protein (BchN-BchB) is the catalytic component of the complex. The protein is Light-independent protochlorophyllide reductase subunit N of Bradyrhizobium sp. (strain BTAi1 / ATCC BAA-1182).